The primary structure comprises 305 residues: Oxygen-dependent coproporphyrinogen-III oxidase (305 aa).

Serine 98 contributes to the substrate binding site. The a divalent metal cation site is built by histidine 102 and histidine 112. Histidine 112 acts as the Proton donor in catalysis. 114-116 (NVR) is a binding site for substrate. A divalent metal cation contacts are provided by histidine 151 and histidine 181. Residues 246-281 (YVEFNLVYDRGTLFGLQSGGRTESILMSMPPLARWE) are important for dimerization. Residue 264–266 (GGR) coordinates substrate.

The protein belongs to the aerobic coproporphyrinogen-III oxidase family. Homodimer. A divalent metal cation serves as cofactor.

It localises to the cytoplasm. It carries out the reaction coproporphyrinogen III + O2 + 2 H(+) = protoporphyrinogen IX + 2 CO2 + 2 H2O. Its pathway is porphyrin-containing compound metabolism; protoporphyrin-IX biosynthesis; protoporphyrinogen-IX from coproporphyrinogen-III (O2 route): step 1/1. In terms of biological role, involved in the heme biosynthesis. Catalyzes the aerobic oxidative decarboxylation of propionate groups of rings A and B of coproporphyrinogen-III to yield the vinyl groups in protoporphyrinogen-IX. This is Oxygen-dependent coproporphyrinogen-III oxidase from Vibrio campbellii (strain ATCC BAA-1116).